Here is a 240-residue protein sequence, read N- to C-terminus: UDP-2,3-diacylglucosamine hydrolase (240 aa).

Residues Asp-8, His-10, Asp-41, Asn-79, and His-114 each contribute to the Mn(2+) site. Position 79–80 (79–80) interacts with substrate; the sequence is NR. Residues Asp-122, Ser-160, Thr-164, Lys-167, and His-195 each contribute to the substrate site. The Mn(2+) site is built by His-195 and His-197.

It belongs to the LpxH family. The cofactor is Mn(2+).

It is found in the cell inner membrane. The enzyme catalyses UDP-2-N,3-O-bis[(3R)-3-hydroxytetradecanoyl]-alpha-D-glucosamine + H2O = 2-N,3-O-bis[(3R)-3-hydroxytetradecanoyl]-alpha-D-glucosaminyl 1-phosphate + UMP + 2 H(+). It participates in glycolipid biosynthesis; lipid IV(A) biosynthesis; lipid IV(A) from (3R)-3-hydroxytetradecanoyl-[acyl-carrier-protein] and UDP-N-acetyl-alpha-D-glucosamine: step 4/6. Its function is as follows. Hydrolyzes the pyrophosphate bond of UDP-2,3-diacylglucosamine to yield 2,3-diacylglucosamine 1-phosphate (lipid X) and UMP by catalyzing the attack of water at the alpha-P atom. Involved in the biosynthesis of lipid A, a phosphorylated glycolipid that anchors the lipopolysaccharide to the outer membrane of the cell. In Pseudomonas paraeruginosa (strain DSM 24068 / PA7) (Pseudomonas aeruginosa (strain PA7)), this protein is UDP-2,3-diacylglucosamine hydrolase.